A 145-amino-acid polypeptide reads, in one-letter code: MGGFTEKQEALVNSSYEAFKANVPQYSVVFYTSILEKAPAAKDLFPFLANGVDPTNPKLIGHAEKLFGLVHDSAAQLRAKGAVVADAALGSLHAQKGVTDPQFVVVKEALLKTVKEAVGDKWSDELSNAWEVAYNELAAALKKAF.

The region spanning 3 to 145 (GFTEKQEALV…ELAAALKKAF (143 aa)) is the Globin domain. A nitrated tyrosine mark is found at tyrosine 26 and tyrosine 31. Position 62 (histidine 62) interacts with O2. The heme b site is built by lysine 65, histidine 93, and lysine 96. A Nitrated tyrosine modification is found at tyrosine 134.

Belongs to the plant globin family. Monomer. Nitrated in effective nodules and particularly in hypoxic conditions; this mechanism may play a protective role in the symbiosis by buffering toxic peroxynitrite NO(2)(-). Nitration level decrease during nodule senescence. In terms of tissue distribution, root nodules.

The protein resides in the cytoplasm. Its subcellular location is the cytosol. It localises to the nucleus. Leghemoglobin that reversibly binds oxygen O(2) through a pentacoordinated heme iron. In root nodules, facilitates the diffusion of oxygen to the bacteroids while preventing the bacterial nitrogenase from being inactivated by buffering dioxygen, nitric oxide and carbon monoxide, and promoting the formation of reactive oxygen species (ROS, e.g. H(2)O(2)). This role is essential for symbiotic nitrogen fixation (SNF). The polypeptide is Leghemoglobin (Psophocarpus tetragonolobus (Winged bean)).